Here is a 119-residue protein sequence, read N- to C-terminus: Large ribosomal subunit protein bL20 (119 aa).

It belongs to the bacterial ribosomal protein bL20 family.

Binds directly to 23S ribosomal RNA and is necessary for the in vitro assembly process of the 50S ribosomal subunit. It is not involved in the protein synthesizing functions of that subunit. The protein is Large ribosomal subunit protein bL20 of Xylella fastidiosa (strain M12).